The chain runs to 398 residues: Phosphoglycerate kinase (398 aa).

Substrate contacts are provided by residues 23–25 (DFN), R38, 61–64 (HLGK), R122, and R155. ATP contacts are provided by residues K206, G297, E328, and 354–357 (GGDS).

It belongs to the phosphoglycerate kinase family. In terms of assembly, monomer.

Its subcellular location is the cytoplasm. The enzyme catalyses (2R)-3-phosphoglycerate + ATP = (2R)-3-phospho-glyceroyl phosphate + ADP. Its pathway is carbohydrate degradation; glycolysis; pyruvate from D-glyceraldehyde 3-phosphate: step 2/5. The protein is Phosphoglycerate kinase of Clostridium kluyveri (strain NBRC 12016).